Consider the following 763-residue polypeptide: Thyrotropin receptor (763 aa).

Positions 1–21 (MRPTPLLRLALFLVLPSSLGG) are cleaved as a signal peptide. The Extracellular segment spans residues 22 to 412 (ERCPSPPCEC…EFNPCEDIMG (391 aa)). Residues C31 and C41 are joined by a disulfide bond. Residues 51–74 (PPSTQTLKFIETHLKTIPSRAFSN) form an LRR 1 repeat. N-linked (GlcNAc...) asparagine glycosylation is found at N77 and N99. 5 LRR repeats span residues 125-150 (LPLL…IYST), 151-174 (DVFF…AFQG), 176-199 (CNET…AFNG), 201-223 (KLDA…AFAG), and 225-248 (YSGP…GLEH). N-linked (GlcNAc...) asparagine glycans are attached at residues N177 and N198. N-linked (GlcNAc...) asparagine glycosylation occurs at N302. The residue at position 384 (Y384) is a Sulfotyrosine. Residues 413–440 (YKFLRIVVWFVSLLALLGNVFVLVILLT) traverse the membrane as a helical segment. Residues 441–449 (SHYKLTVPR) are Cytoplasmic-facing. A helical transmembrane segment spans residues 450 to 472 (FLMCNLAFADFCMGLYLLLIASV). Residues 473 to 493 (DLYTQSEYYNHAIDWQTGPGC) lie on the Extracellular side of the membrane. A disulfide bridge connects residues C493 and C568. The helical transmembrane segment at 494–516 (NTAGFFTVFASELSVYTLTVITL) threads the bilayer. The Cytoplasmic portion of the chain corresponds to 517–536 (ERWHAITFAMRLDRKIRLWH). Residues 537-559 (AYVIMLGGWVCCFLLALLPLVGI) form a helical membrane-spanning segment. Over 560–579 (SSYAKVSICLPMDTETPLAL) the chain is Extracellular. The chain crosses the membrane as a helical span at residues 580-601 (AYIILVLLLNIIAFIIVCACYV). Residues 602–624 (KIYITVRNPHYNPGDKDTRIAKR) lie on the Cytoplasmic side of the membrane. A helical membrane pass occupies residues 625 to 648 (MAVLIFTDFMCMAPISFYALSALM). Residues 649–659 (NKPLITVTNSK) lie on the Extracellular side of the membrane. A helical membrane pass occupies residues 660–681 (ILLVLFYPLNSCANPFLYAIFT). Residues 682–763 (KAFQRDVFML…TSKEYKRTVL (82 aa)) lie on the Cytoplasmic side of the membrane. Residues 742 to 763 (ENSHLTPKQQDQTSKEYKRTVL) are disordered. Residues 744-753 (SHLTPKQQDQ) are compositionally biased toward polar residues. Basic and acidic residues predominate over residues 754–763 (TSKEYKRTVL). The PDZ-binding signature appears at 761–763 (TVL).

This sequence belongs to the G-protein coupled receptor 1 family. FSH/LSH/TSH subfamily. As to quaternary structure, interacts with heterodimer GPHA2:GPHB5; this interaction stimulates cAMP production. Interacts (via the PDZ-binding motif) with SCRIB; regulates TSHR trafficking and function. In terms of processing, glycosylated. Post-translationally, sulfated. Sulfation on Tyr-384 plays a role in thyrotropin receptor binding and activation.

Its subcellular location is the cell membrane. It localises to the basolateral cell membrane. In terms of biological role, receptor for the thyroid-stimulating hormone (TSH) or thyrotropin. Also acts as a receptor for the heterodimeric glycoprotein hormone (GPHA2:GPHB5) or thyrostimulin. The activity of this receptor is mediated by G proteins which activate adenylate cyclase. Plays a central role in controlling thyroid cell metabolism. The sequence is that of Thyrotropin receptor (TSHR) from Bos taurus (Bovine).